A 145-amino-acid polypeptide reads, in one-letter code: Transcription antitermination protein NusB (145 aa).

This sequence belongs to the NusB family.

Its function is as follows. Involved in transcription antitermination. Required for transcription of ribosomal RNA (rRNA) genes. Binds specifically to the boxA antiterminator sequence of the ribosomal RNA (rrn) operons. The chain is Transcription antitermination protein NusB from Geobacter sp. (strain M21).